Consider the following 331-residue polypeptide: Low affinity immunoglobulin epsilon Fc receptor (331 aa).

The Cytoplasmic portion of the chain corresponds to methionine 1–glycine 23. Residues cysteine 17 and cysteine 18 are each lipidated (S-palmitoyl cysteine). The chain crosses the membrane as a helical; Signal-anchor for type II membrane protein span at residues threonine 24–tryptophan 49. Over glutamate 50–proline 331 the chain is Extracellular. Residue asparagine 65 is glycosylated (N-linked (GlcNAc...) asparagine). Repeats lie at residues lysine 71–serine 91, glutamine 92–serine 112, and glutamine 113–serine 133. The N-linked (GlcNAc...) asparagine glycan is linked to asparagine 114. Cystine bridges form between cysteine 183–cysteine 311, cysteine 186–cysteine 197, cysteine 214–cysteine 305, and cysteine 282–cysteine 296. The region spanning isoleucine 185 to serine 298 is the C-type lectin domain. Ca(2+)-binding residues include glutamate 272, asparagine 292, and aspartate 293. An O-linked (Xyl...) (chondroitin sulfate) serine glycan is attached at serine 319.

As to quaternary structure, homotrimer. Interacts (via C-type lectin domain) with IGHE (via CH3 region); this interaction regulates IgE homeostasis. Interacts (via C-terminus) with CR2/CD21 (via Sushi domain 1 and 2). Post-translationally, N- and O-glycosylated.

The protein resides in the cell membrane. The protein localises to the secreted. Its function is as follows. Low-affinity receptor for immunoglobulin E (IgE) and CR2/CD21. Has essential roles in the regulation of IgE production and in the differentiation of B cells. On B cells, initiates IgE-dependent antigen uptake and presentation to T cells. On macrophages, upon IgE binding and antigen cross-linking induces intracellular killing of parasites through activation of L-Arginine-nitric oxide pathway. This chain is Low affinity immunoglobulin epsilon Fc receptor (Fcer2), found in Mus musculus (Mouse).